We begin with the raw amino-acid sequence, 193 residues long: dTTP/UTP pyrophosphatase (193 aa).

The active-site Proton acceptor is the Asp70.

The protein belongs to the Maf family. YhdE subfamily. The cofactor is a divalent metal cation.

It localises to the cytoplasm. It carries out the reaction dTTP + H2O = dTMP + diphosphate + H(+). The enzyme catalyses UTP + H2O = UMP + diphosphate + H(+). Nucleoside triphosphate pyrophosphatase that hydrolyzes dTTP and UTP. May have a dual role in cell division arrest and in preventing the incorporation of modified nucleotides into cellular nucleic acids. The sequence is that of dTTP/UTP pyrophosphatase from Alcanivorax borkumensis (strain ATCC 700651 / DSM 11573 / NCIMB 13689 / SK2).